Reading from the N-terminus, the 520-residue chain is Keratin, type II cytoskeletal 78 (520 aa).

The interval Met-1–Gln-110 is head. Positions Glu-111–Leu-146 are coil 1A. In terms of domain architecture, IF rod spans Glu-111 to Met-424. The interval Gln-147–Cys-165 is linker 1. A coil 1B region spans residues Leu-166 to Gln-258. The tract at residues Thr-259 to Ile-281 is linker 12. The segment at Ile-282 to Glu-421 is coil 2. Positions Cys-422–Tyr-520 are tail.

Belongs to the intermediate filament family. Heterotetramer of two type I and two type II keratins. In non-keratinising esophageal and vaginal epithelium, strongly expressed in the basal and parabasal/lower suprabasal cell layers with considerably decreased expression in the mid/upper suprabasal layers (at protein level). A similar gradient from basal to lower suprabasal layers is seen in the partially keratinised dorsal tongue epithelium, in the scalp and in the plantar epidermis (at protein level). Extension of expression into the suprabasal compartments is distinctly more pronounced in non-keratinising epithelia than in keratinising epithelia and epidermis (at protein level). In scalp sections, present in the interfollicular epidermis and infundibulum including the entire outer root sheath of the hair follicles and also in the sebocytes (at protein level). In sweat glands, expressed in peripheral and luminal cells of the lower duct and in peripheral cells of the middle/upper duct with no expression observed in luminal cells (at protein level). In embryos at the 14th week of pregnancy, detected in basal and parabasal layers but is absent from the uppermost epidermal layer (at protein level). Expressed in tongue epithelium.

In Homo sapiens (Human), this protein is Keratin, type II cytoskeletal 78 (KRT78).